The primary structure comprises 334 residues: Phosphoribosylformylglycinamidine cyclo-ligase (334 aa).

This sequence belongs to the AIR synthase family.

It is found in the cytoplasm. It catalyses the reaction 2-formamido-N(1)-(5-O-phospho-beta-D-ribosyl)acetamidine + ATP = 5-amino-1-(5-phospho-beta-D-ribosyl)imidazole + ADP + phosphate + H(+). It functions in the pathway purine metabolism; IMP biosynthesis via de novo pathway; 5-amino-1-(5-phospho-D-ribosyl)imidazole from N(2)-formyl-N(1)-(5-phospho-D-ribosyl)glycinamide: step 2/2. In Thermococcus kodakarensis (strain ATCC BAA-918 / JCM 12380 / KOD1) (Pyrococcus kodakaraensis (strain KOD1)), this protein is Phosphoribosylformylglycinamidine cyclo-ligase.